Here is a 402-residue protein sequence, read N- to C-terminus: MNITGIITEYNPFHLGHELHLKNSKEITNCDGVICVMSGNFVQRGLPALTDKWTRTKMALEAGVDLVVELPTLFATSSAEFFAFGAVSLLNSLNVVNNICFGSECGDIDLIKKLSEIIVNEPPIFKEYLKDYLKEGLPFPKARSEALMKYLDYNNYKTDFSYLEKVLNSSNNILAIEYCKSLYKLQSTIKPFTIQRLGADYNDEELSKNEIASASAIRKSIYTSNIEESLDFMPEYSYNLLKNTSFSDLDKMFDLVKYAIVSNPNILKEIPEASEGIDNKIIQNIGKANSLDELINLCKSKRYSYTRLNRILCHILLNVNKDLLSLRKYSPNYVRILGFNNKGREILKEIKKNSEINIVNKLSKAKTDPLLEFDIKATNIYSFLNPSVKINSDYLISPIIFR.

Residues 7–20 (ITEYNPFHLGHELH), Gly-102, Asn-171, and Arg-196 each bind ATP.

This sequence belongs to the TmcAL family.

The protein localises to the cytoplasm. It catalyses the reaction cytidine(34) in elongator tRNA(Met) + acetate + ATP = N(4)-acetylcytidine(34) in elongator tRNA(Met) + AMP + diphosphate. Functionally, catalyzes the formation of N(4)-acetylcytidine (ac(4)C) at the wobble position of elongator tRNA(Met), using acetate and ATP as substrates. First activates an acetate ion to form acetyladenylate (Ac-AMP) and then transfers the acetyl group to tRNA to form ac(4)C34. The polypeptide is tRNA(Met) cytidine acetate ligase (Clostridium perfringens (strain SM101 / Type A)).